A 206-amino-acid polypeptide reads, in one-letter code: Ras-related protein RABG3a (206 aa).

Residue 15-22 (GDSGVGKT) participates in GTP binding. The Effector region signature appears at 37 to 45 (YKATIGADF). GTP-binding positions include 63 to 67 (DTAGQ), 125 to 128 (NKID), and 158 to 159 (SA). Residues Cys-204 and Cys-206 are each lipidated (S-geranylgeranyl cysteine). The residue at position 206 (Cys-206) is a Cysteine methyl ester.

Belongs to the small GTPase superfamily. Rab family.

The protein resides in the cell membrane. Functionally, intracellular vesicle trafficking and protein transport. The polypeptide is Ras-related protein RABG3a (RABG3A) (Arabidopsis thaliana (Mouse-ear cress)).